The chain runs to 199 residues: Probable thymidylate kinase (199 aa).

9-16 (GIDGCGKT) serves as a coordination point for ATP.

The protein belongs to the thymidylate kinase family.

It carries out the reaction dTMP + ATP = dTDP + ADP. This Methanococcus maripaludis (strain DSM 14266 / JCM 13030 / NBRC 101832 / S2 / LL) protein is Probable thymidylate kinase.